We begin with the raw amino-acid sequence, 444 residues long: MIEDNKENKDHSLERGRATLIFSLKNEVGGLIKALKIFQEKHVNLLHIESRKSKRRNSEFEIFVDCDTNREQLNDIFHLLKSHTNVLSVTPPDNFTMKEEGMESVPWFPKKISDLDHCANRVLMYGSELDADHPGFKDNVYRKRRKYFADLAMSYKYGDPIPKVEFTEEEIKTWGTVFRELNKLYPTHACREYLKNLPLLSKYCGYREDNIPQLEDISNFLKERTGFSIRPVAGYLSPRDFLSGLAFRVFHCTQYVRHSSDPFYTPEPDTCHELLGHVPLLAEPSFAQFSQEIGLASLGASEEAVQKLATCYFFTVEFGLCKQDGQLRVFGAGLLSSISELKHVLSGHAKVKPFDPKITYKQECLITTFQDVYFVSESFEDAKEKMREFTKTIKRPFGVKYNPYTRSIQILKDAKSITNAMNELRHDLDVVSDALGKVSRQLSV.

The 76-residue stretch at 19–94 (TLIFSLKNEV…NVLSVTPPDN (76 aa)) folds into the ACT domain. S58 is modified (phosphoserine; by PKA). L-tryptophan is bound by residues Y235, R257, and T265. 3 residues coordinate Fe cation: H272, H277, and E317. 2 residues coordinate L-tryptophan: S336 and I366.

Belongs to the biopterin-dependent aromatic amino acid hydroxylase family. As to quaternary structure, homotetramer. Interacts with DNAJC12. Fe(2+) is required as a cofactor. Ubiquitinated, leading to its degradation by the proteasome. Ubiquitinated is triggered by phosphorylation. In terms of processing, phosphorylated; triggering degradation by the proteasome.

The enzyme catalyses (6R)-L-erythro-5,6,7,8-tetrahydrobiopterin + L-tryptophan + O2 = 5-hydroxy-L-tryptophan + (4aS,6R)-4a-hydroxy-L-erythro-5,6,7,8-tetrahydrobiopterin. Its pathway is aromatic compound metabolism; serotonin biosynthesis; serotonin from L-tryptophan: step 1/2. Its function is as follows. Oxidizes L-tryptophan to 5-hydroxy-l-tryptophan in the rate-determining step of serotonin biosynthesis. This Oryctolagus cuniculus (Rabbit) protein is Tryptophan 5-hydroxylase 1 (TPH1).